Consider the following 361-residue polypeptide: Phosphoserine aminotransferase (361 aa).

An L-glutamate-binding site is contributed by Arg43. Pyridoxal 5'-phosphate is bound by residues 77–78, Trp103, Thr153, Asp172, and Gln195; that span reads AS. Lys196 carries the N6-(pyridoxal phosphate)lysine modification. Position 237-238 (237-238) interacts with pyridoxal 5'-phosphate; it reads NT.

This sequence belongs to the class-V pyridoxal-phosphate-dependent aminotransferase family. SerC subfamily. Homodimer. The cofactor is pyridoxal 5'-phosphate.

Its subcellular location is the cytoplasm. The enzyme catalyses O-phospho-L-serine + 2-oxoglutarate = 3-phosphooxypyruvate + L-glutamate. It catalyses the reaction 4-(phosphooxy)-L-threonine + 2-oxoglutarate = (R)-3-hydroxy-2-oxo-4-phosphooxybutanoate + L-glutamate. It participates in amino-acid biosynthesis; L-serine biosynthesis; L-serine from 3-phospho-D-glycerate: step 2/3. Its pathway is cofactor biosynthesis; pyridoxine 5'-phosphate biosynthesis; pyridoxine 5'-phosphate from D-erythrose 4-phosphate: step 3/5. In terms of biological role, catalyzes the reversible conversion of 3-phosphohydroxypyruvate to phosphoserine and of 3-hydroxy-2-oxo-4-phosphonooxybutanoate to phosphohydroxythreonine. The polypeptide is Phosphoserine aminotransferase (Desulfotalea psychrophila (strain LSv54 / DSM 12343)).